A 222-amino-acid chain; its full sequence is Phosphoribosylformylglycinamidine synthase subunit PurQ (222 aa).

In terms of domain architecture, Glutamine amidotransferase type-1 spans 3–222 (AAVVVFPGSN…RALTGALAAV (220 aa)). Cys86 (nucleophile) is an active-site residue. Residues His194 and Glu196 contribute to the active site.

As to quaternary structure, part of the FGAM synthase complex composed of 1 PurL, 1 PurQ and 2 PurS subunits.

Its subcellular location is the cytoplasm. The enzyme catalyses N(2)-formyl-N(1)-(5-phospho-beta-D-ribosyl)glycinamide + L-glutamine + ATP + H2O = 2-formamido-N(1)-(5-O-phospho-beta-D-ribosyl)acetamidine + L-glutamate + ADP + phosphate + H(+). It carries out the reaction L-glutamine + H2O = L-glutamate + NH4(+). It functions in the pathway purine metabolism; IMP biosynthesis via de novo pathway; 5-amino-1-(5-phospho-D-ribosyl)imidazole from N(2)-formyl-N(1)-(5-phospho-D-ribosyl)glycinamide: step 1/2. Functionally, part of the phosphoribosylformylglycinamidine synthase complex involved in the purines biosynthetic pathway. Catalyzes the ATP-dependent conversion of formylglycinamide ribonucleotide (FGAR) and glutamine to yield formylglycinamidine ribonucleotide (FGAM) and glutamate. The FGAM synthase complex is composed of three subunits. PurQ produces an ammonia molecule by converting glutamine to glutamate. PurL transfers the ammonia molecule to FGAR to form FGAM in an ATP-dependent manner. PurS interacts with PurQ and PurL and is thought to assist in the transfer of the ammonia molecule from PurQ to PurL. The protein is Phosphoribosylformylglycinamidine synthase subunit PurQ of Roseobacter denitrificans (strain ATCC 33942 / OCh 114) (Erythrobacter sp. (strain OCh 114)).